The following is a 701-amino-acid chain: Reverse gyrase subunit A (701 aa).

The region spanning 41-197 (MVLFIVESPN…NIYRAEFHEV (157 aa)) is the Toprim domain. A Mg(2+)-binding site is contributed by E47. An RG C-terminal-type zinc finger spans residues 117–143 (IKKCLDCGHQFVDEDKCPRCGSENIDD). Zn(2+) contacts are provided by C120, C123, C133, and C136. Residue D166 participates in Mg(2+) binding. Residues 213–602 (NTNRVKAQLV…SFKKELIEIW (390 aa)) form the Topo IA-type catalytic domain. Y352 functions as the O-(5'-phospho-DNA)-tyrosine intermediate in the catalytic mechanism.

It belongs to the type IA topoisomerase family. Heterodimer of an RgyA and RgyB subunit. Zn(2+) serves as cofactor. The cofactor is Mg(2+).

It localises to the cytoplasm. Modifies the topological state of DNA by introducing positive supercoils in an ATP-dependent process. Binds to single-stranded DNA, transiently cleaves and then rejoins the end, introducing a positive supercoil in the process. The scissile phosphodiester is attacked by the catalytic tyrosine of the enzyme, resulting in the formation of a DNA-(5'-phosphotyrosyl)-enzyme intermediate. Probably involved in rewinding DNA strands in regions of the chromosome that have opened up to allow replication, transcription, DNA repair or for DNA protection. Reconstituted holoenzyme binds dsDNA a bit better than ssDNA, this subunit preferentially binds ssDNA. In isolation this subunit relaxes negatively-supercoiled DNA, and stimulates the endogenous ATPase activity of the RgyB subunit. The chain is Reverse gyrase subunit A from Nanoarchaeum equitans (strain Kin4-M).